A 223-amino-acid chain; its full sequence is Deoxyribose-phosphate aldolase (223 aa).

Aspartate 91 serves as the catalytic Proton donor/acceptor. Lysine 153 serves as the catalytic Schiff-base intermediate with acetaldehyde. Residue lysine 182 is the Proton donor/acceptor of the active site.

It belongs to the DeoC/FbaB aldolase family. DeoC type 1 subfamily.

The protein localises to the cytoplasm. The catalysed reaction is 2-deoxy-D-ribose 5-phosphate = D-glyceraldehyde 3-phosphate + acetaldehyde. It participates in carbohydrate degradation; 2-deoxy-D-ribose 1-phosphate degradation; D-glyceraldehyde 3-phosphate and acetaldehyde from 2-deoxy-alpha-D-ribose 1-phosphate: step 2/2. Catalyzes a reversible aldol reaction between acetaldehyde and D-glyceraldehyde 3-phosphate to generate 2-deoxy-D-ribose 5-phosphate. The chain is Deoxyribose-phosphate aldolase from Streptococcus pyogenes serotype M1.